The following is a 200-amino-acid chain: Small ribosomal subunit protein uS4 (200 aa).

An S4 RNA-binding domain is found at 92–155; the sequence is SRLDNLVYRM…RNLTVVKEAL (64 aa).

This sequence belongs to the universal ribosomal protein uS4 family. As to quaternary structure, part of the 30S ribosomal subunit. Contacts protein S5. The interaction surface between S4 and S5 is involved in control of translational fidelity.

In terms of biological role, one of the primary rRNA binding proteins, it binds directly to 16S rRNA where it nucleates assembly of the body of the 30S subunit. With S5 and S12 plays an important role in translational accuracy. The polypeptide is Small ribosomal subunit protein uS4 (Shouchella clausii (strain KSM-K16) (Alkalihalobacillus clausii)).